The following is a 2462-amino-acid chain: Non-reducing polyketide synthase ausA (2462 aa).

The segment at 16–253 is N-terminal acylcarrier protein transacylase domain (SAT); that stretch reads VFFGPVYPEL…HTADHIPAMK (238 aa). Residues 385 to 801 enclose the Ketosynthase family 3 (KS3) domain; that stretch reads SAPIAVTGFA…GSNAVIVVKE (417 aa). Catalysis depends on for beta-ketoacyl synthase activity residues cysteine 550, histidine 685, and histidine 724. The segment at 904–1208 is malonyl-CoA:ACP transacylase (MAT) domain; that stretch reads LCFGGQTGDT…LPIDLQESTA (305 aa). The active-site For acyl/malonyl transferase activity is serine 991. An N-terminal hotdog fold region spans residues 1274 to 1403; sequence HDDGLLQLVE…GKVLLDPQAA (130 aa). One can recognise a PKS/mFAS DH domain in the interval 1274–1581; sequence HDDGLLQLVE…FTSVSIQSLK (308 aa). Residues 1277–1580 are product template (PT) domain; sequence GLLQLVERDA…TFTSVSIQSL (304 aa). Histidine 1307 (proton acceptor; for dehydratase activity) is an active-site residue. Positions 1431-1581 are C-terminal hotdog fold; that stretch reads SSNGLKRATV…FTSVSIQSLK (151 aa). Aspartate 1489 functions as the Proton donor; for dehydratase activity in the catalytic mechanism. The Carrier domain occupies 1613-1690; the sequence is VSDDHHLRAV…GLAHRISPSS (78 aa). An O-(pantetheine 4'-phosphoryl)serine modification is found at serine 1650. Residues 1850-2083 form a methyltransferase (CMeT) domain region; it reads QHASEHKLLR…GFNWVDWTDN (234 aa). The segment at 2112 to 2462 is thioesterase (TE) domain; the sequence is TPARVETVRY…YEFLRQHVAV (351 aa). Catalysis depends on for thioesterase activity residues serine 2235, aspartate 2398, and histidine 2430.

The enzyme catalyses 3 malonyl-CoA + acetyl-CoA + 2 S-adenosyl-L-methionine = 3,5-dimethylorsellinate + 2 S-adenosyl-L-homocysteine + 3 CO2 + 4 CoA. It functions in the pathway secondary metabolite biosynthesis; terpenoid biosynthesis. Its function is as follows. Non-reducing polyketide synthase; part of the gene cluster that mediates the biosynthesis of calidodehydroaustin, a fungal meroterpenoid. The first step of the pathway is the synthesis of 3,5-dimethylorsellinic acid by the polyketide synthase ausA. 3,5-dimethylorsellinic acid is then prenylated by the polyprenyl transferase ausN. Further epoxidation by the FAD-dependent monooxygenase ausM and cyclization by the probable terpene cyclase ausL lead to the formation of protoaustinoid A. Protoaustinoid A is then oxidized to spiro-lactone preaustinoid A3 by the combined action of the FAD-binding monooxygenases ausB and ausC, and the dioxygenase ausE. Acid-catalyzed keto-rearrangement and ring contraction of the tetraketide portion of preaustinoid A3 by ausJ lead to the formation of preaustinoid A4. The aldo-keto reductase ausK, with the help of ausH, is involved in the next step by transforming preaustinoid A4 into isoaustinone which is in turn hydroxylated by the P450 monooxygenase ausI to form austinolide. The cytochrome P450 monooxygenase ausG modifies austinolide to austinol. Austinol is further acetylated to austin by the O-acetyltransferase ausP, which spontaneously changes to dehydroaustin. The cytochrome P450 monooxygenase ausR then converts dehydroaustin is into 7-dehydrodehydroaustin. The hydroxylation catalyzed by ausR permits the O-acetyltransferase ausQ to add an additional acetyl group to the molecule, leading to the formation of acetoxydehydroaustin. The short chain dehydrogenase ausT catalyzes the reduction of the double bond present between carbon atoms 1 and 2 to convert 7-dehydrodehydroaustin into 1,2-dihydro-7-hydroxydehydroaustin. AusQ catalyzes not only an acetylation reaction but also the addition of the PKS ausV diketide product to 1,2-dihydro-7-hydroxydehydroaustin, forming precalidodehydroaustin. Finally, the iron/alpha-ketoglutarate-dependent dioxygenase converts precalidodehydroaustin into calidodehydroaustin. The protein is Non-reducing polyketide synthase ausA of Aspergillus calidoustus.